The following is a 374-amino-acid chain: Alanine racemase (374 aa).

K35 acts as the Proton acceptor; specific for D-alanine in catalysis. K35 is subject to N6-(pyridoxal phosphate)lysine. R130 lines the substrate pocket. Y261 acts as the Proton acceptor; specific for L-alanine in catalysis. M309 lines the substrate pocket.

The protein belongs to the alanine racemase family. Pyridoxal 5'-phosphate serves as cofactor.

It carries out the reaction L-alanine = D-alanine. Its pathway is amino-acid biosynthesis; D-alanine biosynthesis; D-alanine from L-alanine: step 1/1. Its function is as follows. Catalyzes the interconversion of L-alanine and D-alanine. May also act on other amino acids. This is Alanine racemase (alr) from Albidiferax ferrireducens (strain ATCC BAA-621 / DSM 15236 / T118) (Rhodoferax ferrireducens).